Reading from the N-terminus, the 250-residue chain is MGACRIQYVLLIFLLIASRWTLVQNTYCQVSQTLSLEDDPGRTFNWTSKAEQCNPGELCQETVLLIKADGTRTVVLASKSCVSQGGEAVTFIQYTAPPGLVAISYSNYCNDSLCNNKDSLASVWRVPETTATSNMSGTRHCPTCVALGSCSSAPSMPCANGTTQCYQGRLEFSGGGMDATVQVKGCTTTIGCRLMAMIDSVGPMTVKETCSYQSFLQPRKAEIGASQMPTSLWVLELLFPLLLLPLTHFP.

The first 25 residues, 1–25 (MGACRIQYVLLIFLLIASRWTLVQN), serve as a signal peptide directing secretion. N-linked (GlcNAc...) asparagine glycosylation is found at N45, N110, N134, and N160. A UPAR/Ly6 domain is found at 141-215 (CPTCVALGSC…VKETCSYQSF (75 aa)). G224 is lipidated: GPI-anchor amidated glycine. Residues 225-250 (ASQMPTSLWVLELLFPLLLLPLTHFP) constitute a propeptide, removed in mature form.

Interacts with VAMP3. Interacts with LY6K. Interacts with DPEP3; co-localized on the cell surface of spermatocytes, spermatids, and testicular spermatozoa, co-localized only in cytoplasmic droplets of caput and corpus epididymal sperm. Interacts with ADAM3; co-localized on sperm surface. Interacts with ADAM5. N-glycosylated; by high mannose and/or biantennary complex and/or certain types of hybrid oligosaccharides; possesses different oligosaccharides chains according to its subcellular localization in the testis. Post-translationally, sheds from membrane raft by ACE and released from the cell surface of epididymal sperm while it passes through the caput epididymis leading to disappearance of TEX101 on spermatozoa; is essential to produce fertile spermatozoa. Detected in testis and ovary. Expressed in spermatocytes, spermatids and testicular spermatozoa, but not in spermatogonia or interstitial cells. Expressed abundantly in testicular germ cells (TGCs) but mostly disappeared from epididymal spermatozoa.

It is found in the cell membrane. The protein resides in the membrane raft. It localises to the cytoplasmic vesicle. Its subcellular location is the secretory vesicle. The protein localises to the acrosome. It is found in the secreted. Its function is as follows. Plays a role in fertilization by controlling binding of sperm to zona pellucida and migration of spermatozoa into the oviduct probably through molecule adhesion ADAM3. May play a role in signal transduction and promote protein tyrosine phosphorylation. The sequence is that of Testis-expressed protein 101 from Mus musculus (Mouse).